The sequence spans 351 residues: Calcium homeostasis modulator 1 (351 aa).

Over 1-20 (MDKFRMMFQFLQSNQESFMN) the chain is Cytoplasmic. Positions 9–36 (QFLQSNQESFMNGICGIMALASAQMYSS) are central pore. A helical membrane pass occupies residues 21 to 36 (GICGIMALASAQMYSS). The Extracellular portion of the chain corresponds to 37-48 (FEFSCPCMPEYN). Disulfide bonds link cysteine 41–cysteine 126 and cysteine 43–cysteine 160. The chain crosses the membrane as a helical span at residues 49-71 (YTYGIGLLIIPPIWFFLLGFVLN). A phospholipid-binding region spans residues 62–69 (WFFLLGFV). At 72-98 (NNVSVLAEEWKRPTGRRTKDPSVLRYM) the chain is on the cytoplasmic side. The helical transmembrane segment at 99 to 124 (LCSITQRSLIAPAVWVSVTLMDGKSF) threads the bilayer. Residue cysteine 100 is the site of S-palmitoyl cysteine attachment. Positions 104–116 (QRSLIAPAVWVSV) are phospholipid-binding. At 125-177 (LCAFSINLDIEKFGNASLVIGMTETEKLKFLARIPCKDLFEDNEVRVAATRYI) the chain is on the extracellular side. Asparagine 139 carries an N-linked (GlcNAc...) asparagine glycan. The helical transmembrane segment at 178 to 203 (KCISQACGWMFLLMMTFTAFLIRAIR) threads the bilayer. A phospholipid-binding region spans residues 189–199 (LLMMTFTAFLI). The Cytoplasmic segment spans residues 204–351 (PCFTQAAFLK…KEWAVYYSKV (148 aa)). A lipid anchor (S-palmitoyl cysteine) is attached at cysteine 205. The interval 259–281 (HRHQSKDTSDAEEEEKQRSDEDK) is disordered. Basic and acidic residues predominate over residues 263 to 281 (SKDTSDAEEEEKQRSDEDK).

The protein belongs to the CALHM family. In terms of assembly, oligomerizes to form hexamers and octamers. Does not form gap junctions. Associates with CALHM3 as a pore-forming subunit in a hetero-hexameric channel complex. Post-translationally, N-glycosylated. Palmitoylated.

It is found in the cell membrane. Its subcellular location is the endoplasmic reticulum membrane. The protein localises to the basolateral cell membrane. The enzyme catalyses ATP(in) = ATP(out). It carries out the reaction Ca(2+)(in) = Ca(2+)(out). The catalysed reaction is Mg(2+)(in) = Mg(2+)(out). It catalyses the reaction Na(+)(in) = Na(+)(out). The enzyme catalyses K(+)(in) = K(+)(out). It carries out the reaction Li(+)(in) = Li(+)(out). The catalysed reaction is Rb(+)(in) = Rb(+)(out). It catalyses the reaction Cs(+)(in) = Cs(+)(out). The enzyme catalyses chloride(in) = chloride(out). Its activity is regulated as follows. Activated in response to membrane depolarization and low extracellular Ca(2+) concentration. Inhibited by ruthenium red. Functionally, pore-forming subunit of a voltage-gated ion channel. Has poor ion selectivity and forms a wide pore that mediates permeation of small ions including Ca(2+), Na(+), K(+) and Cl(-), as well as larger ions such as ATP(4-). The protein is Calcium homeostasis modulator 1 of Oryzias latipes (Japanese rice fish).